Here is a 376-residue protein sequence, read N- to C-terminus: Transforming growth factor beta-1 proprotein (376 aa).

An N-terminal signal peptide occupies residues 1–22 (MRVESLLLALQCLLGFVHYSGA). The tract at residues 23–68 (LSTCSPLDLELIKRKRIEAIRGQILSKLRLSKEPEVDEEKESQNIP) is straightjacket domain. The arm domain stretch occupies residues 69-258 (AELISVYNST…SLPLDGNNSS (190 aa)). Asparagine 76, asparagine 125, and asparagine 167 each carry an N-linked (GlcNAc...) asparagine glycan. The bowtie tail stretch occupies residues 214 to 238 (DPQKTFQLKIPGLVLVRGDTETLAV). A Cell attachment site motif is present at residues 230–232 (RGD). Disulfide bonds link cysteine 272/cysteine 280, cysteine 308/cysteine 373, and cysteine 312/cysteine 375.

This sequence belongs to the TGF-beta family. As to quaternary structure, latency-associated peptide: Homodimer; disulfide-linked. Latency-associated peptide: Interacts with Transforming growth factor beta-1 (TGF-beta-1) chain; interaction is non-covalent and maintains (TGF-beta-1) in a latent state; each Latency-associated peptide (LAP) monomer interacts with TGF-beta-1 in the other monomer. Transforming growth factor beta-1: Homodimer; disulfide-linked. Transforming growth factor beta-1: Interacts with TGF-beta receptors (tgfbr1 and tgfbr2), leading to signal transduction. Interacts with EFEMP2. Post-translationally, transforming growth factor beta-1 proprotein: The precursor proprotein is cleaved in the Golgi apparatus to form Transforming growth factor beta-1 (TGF-beta-1) and Latency-associated peptide (LAP) chains, which remain non-covalently linked, rendering TGF-beta-1 inactive.

Its subcellular location is the secreted. It localises to the extracellular space. It is found in the extracellular matrix. Functionally, transforming growth factor beta-1 proprotein: Precursor of the Latency-associated peptide (LAP) and Transforming growth factor beta-1 (TGF-beta-1) chains, which constitute the regulatory and active subunit of TGF-beta-1, respectively. In terms of biological role, required to maintain the Transforming growth factor beta-1 (TGF-beta-1) chain in a latent state during storage in extracellular matrix. Associates non-covalently with TGF-beta-1 and regulates its activation via interaction with 'milieu molecules', such as LTBP1, LRRC32/GARP and LRRC33/NRROS, that control activation of TGF-beta-1. Interaction with integrins (ITGAV:ITGB6 or ITGAV:ITGB8) results in distortion of the Latency-associated peptide chain and subsequent release of the active TGF-beta-1. Its function is as follows. Transforming growth factor beta-1: Multifunctional protein that regulates the growth and differentiation of various cell types and is involved in various processes, such as normal development, immune function, microglia function and responses to neurodegeneration. Activation into mature form follows different steps: following cleavage of the proprotein in the Golgi apparatus, Latency-associated peptide (LAP) and Transforming growth factor beta-1 (TGF-beta-1) chains remain non-covalently linked rendering TGF-beta-1 inactive during storage in extracellular matrix. At the same time, LAP chain interacts with 'milieu molecules', such as ltbp1, lrrc32/garp and lrrc33/nrros that control activation of TGF-beta-1 and maintain it in a latent state during storage in extracellular milieus. TGF-beta-1 is released from LAP by integrins (ITGAV:ITGB6 or ITGAV:ITGB8): integrin-binding to LAP stabilizes an alternative conformation of the LAP bowtie tail and results in distortion of the LAP chain and subsequent release of the active TGF-beta-1. Once activated following release of LAP, TGF-beta-1 acts by binding to TGF-beta receptors (tgfbr1 and tgfbr2), which transduce signal. While expressed by many cells types, TGF-beta-1 only has a very localized range of action within cell environment thanks to fine regulation of its activation by Latency-associated peptide chain (LAP) and 'milieu molecules'. Plays an important role in bone remodeling: acts as a potent stimulator of osteoblastic bone formation. Can promote either T-helper 17 cells (Th17) or regulatory T-cells (Treg) lineage differentiation in a concentration-dependent manner. Can induce epithelial-to-mesenchymal transition (EMT) and cell migration in various cell types. The protein is Transforming growth factor beta-1 proprotein (tgfb1) of Cyprinus carpio (Common carp).